Here is a 473-residue protein sequence, read N- to C-terminus: MENLSNPDENDDHQSPRSIDQNDQSAVETPVYSTMSIDSFVYPRTCSETTSGFSDQIDETNSFCSEASPCNWPVLTESKSSKCLSGLEMQSNECLVVQEISEPELETMKERFAKLLLGEDMSGSGKGVCTAVTISNAITNLYATVFGQNLRLEPLETEKRALWKREMNCLLSVCDYIVEFIPRCQNLSNGATVEVMESRPRADIYINLPALRKLDSMLMEALDSFQNTEFWYAEEGSLSMKSARSSTGSFRKVIVQRKEEKWWLPVPLVPSEGLSDKARKQLKNKRESTNQIHKAAMAINSSILSEMEIPDSYMTTLPKCGKSSVGDSIYRYMSGSGRFFPEQLLDCLNISSEHEAVQLADRVEASMYTWRRKSCLSNSKNSWNMVKDLMSTTERTDKNYVMAERAETLLFCLKQRYPELSQTSLDICKIQYNKDVGKAVLESYSRVLEGLAFNIVAWIDDVLYVDKTMRGSE.

Positions 1-28 (MENLSNPDENDDHQSPRSIDQNDQSAVE) are disordered. The span at 16–28 (PRSIDQNDQSAVE) shows a compositional bias: polar residues. The PRONE domain occupies 95–473 (LVVQEISEPE…YVDKTMRGSE (379 aa)).

Its function is as follows. Guanine-nucleotide exchange factor (GEF) that acts as an activator of Rop (Rho of plants) GTPases by promoting the exchange of GDP for GTP. The chain is Rop guanine nucleotide exchange factor 3 (ROPGEF3) from Arabidopsis thaliana (Mouse-ear cress).